A 208-amino-acid chain; its full sequence is Putative ankyrin repeat protein Ta0196 (208 aa).

ANK repeat units follow at residues 49–78 (YQRNALMISAMYGRTDLIEFFAARYDHIDD), 82–111 (EGNTALMWAVRNNRMESAKSLIALKCSIDI), 115–144 (AGNTPICWAVIFGYTDMVKLLISSGANINI), and 148–177 (EGDTPAILASKYGRSECLKMLIEAGCDLNA).

This is Putative ankyrin repeat protein Ta0196 from Thermoplasma acidophilum (strain ATCC 25905 / DSM 1728 / JCM 9062 / NBRC 15155 / AMRC-C165).